The sequence spans 100 residues: Urease subunit gamma (100 aa).

The protein belongs to the urease gamma subunit family. Heterotrimer of UreA (gamma), UreB (beta) and UreC (alpha) subunits. Three heterotrimers associate to form the active enzyme.

It localises to the cytoplasm. It catalyses the reaction urea + 2 H2O + H(+) = hydrogencarbonate + 2 NH4(+). It functions in the pathway nitrogen metabolism; urea degradation; CO(2) and NH(3) from urea (urease route): step 1/1. The sequence is that of Urease subunit gamma from Ruegeria pomeroyi (strain ATCC 700808 / DSM 15171 / DSS-3) (Silicibacter pomeroyi).